The following is a 245-amino-acid chain: 1-(5-phosphoribosyl)-5-[(5-phosphoribosylamino)methylideneamino] imidazole-4-carboxamide isomerase (245 aa).

Asp13 acts as the Proton acceptor in catalysis. Asp132 (proton donor) is an active-site residue.

Belongs to the HisA/HisF family.

It localises to the cytoplasm. It carries out the reaction 1-(5-phospho-beta-D-ribosyl)-5-[(5-phospho-beta-D-ribosylamino)methylideneamino]imidazole-4-carboxamide = 5-[(5-phospho-1-deoxy-D-ribulos-1-ylimino)methylamino]-1-(5-phospho-beta-D-ribosyl)imidazole-4-carboxamide. The protein operates within amino-acid biosynthesis; L-histidine biosynthesis; L-histidine from 5-phospho-alpha-D-ribose 1-diphosphate: step 4/9. The sequence is that of 1-(5-phosphoribosyl)-5-[(5-phosphoribosylamino)methylideneamino] imidazole-4-carboxamide isomerase from Frankia alni (strain DSM 45986 / CECT 9034 / ACN14a).